The sequence spans 1813 residues: Latent-transforming growth factor beta-binding protein 2 (1813 aa).

The signal sequence occupies residues 1-35; it reads MRAPTTARCSGCIQRVRWRGFLPLVLAVLMGTSHA. Positions 94–115 are heparin-binding; the sequence is NPGWLAEAEARRPPRTQQLRRV. A disordered region spans residues 103–152; it reads ARRPPRTQQLRRVQPPVQTRRSHPRGQQQIAARAAPSVARLETPQRPAAA. The segment covering 108–132 has biased composition (polar residues); it reads RTQQLRRVQPPVQTRRSHPRGQQQI. A glycan (N-linked (GlcNAc...) asparagine) is linked at Asn-175. One can recognise an EGF-like 1 domain in the interval 181–213; that stretch reads IKPVCQPPCQNRGSCSRPQVCICRSGFRGARCE. 3 disulfide bridges follow: Cys-185–Cys-195, Cys-189–Cys-201, and Cys-203–Cys-212. Positions 220-305 are disordered; it reads EFDPQNARPV…QLMSNALPSG (86 aa). The segment at 226 to 243 is heparin-binding; sequence ARPVPRRSVERAPGPHRS. Residues 257-266 show a composition bias toward pro residues; sequence LVPPPSPPPS. Residues 293 to 302 show a composition bias toward polar residues; sequence ANGQLMSNAL. A glycan (N-linked (GlcNAc...) asparagine) is linked at Asn-328. Residue 329 to 339 coordinates heparin; it reads LTEKIKKIKVV. One can recognise an EGF-like 2 domain in the interval 381 to 413; it reads RIYFCQIPCLNGGRCIGRDECWCPANSTGKFCH. 3 disulfide bridges follow: Cys-385–Cys-395, Cys-389–Cys-401, and Cys-403–Cys-412. Asn-406 carries N-linked (GlcNAc...) asparagine glycosylation. Ser-491 is modified (phosphoserine). The segment at 492 to 524 is disordered; the sequence is VETRASHRPHGNLGHSPWASNSIPARAGEAPRP. A TB 1 domain is found at 536 to 588; the sequence is GQCYLSTVNGQCANPLGSLTSQEDCCGSVGTFWGVTSCAPCPPRQEGPAFPVI. 3 disulfides stabilise this stretch: Cys-538–Cys-560, Cys-547–Cys-573, and Cys-561–Cys-576. Residue Asn-603 is glycosylated (N-linked (GlcNAc...) asparagine). In terms of domain architecture, EGF-like 3; calcium-binding spans 609–649; it reads DINECLTLGLCKDSECVNTRGSYLCTCRPGLMLDPSRSRCV. Disulfide bonds link Cys-613–Cys-624, Cys-619–Cys-633, Cys-635–Cys-648, Cys-661–Cys-683, Cys-670–Cys-696, Cys-684–Cys-699, and Cys-685–Cys-711. The 53-residue stretch at 659–711 folds into the TB 2 domain; the sequence is GLCYRSLGSGTCTLPLVHRITKQICCCSRVGKAWGSTCEQCPLPGTEAFREIC. 2 disordered regions span residues 730–761 and 787–819; these read KAEE…QPLR and SAPH…PAEE. The region spanning 835-877 is the EGF-like 4 domain; the sequence is DFDPCFAGASNICGPGTCVSLPNGYRCVCSPGYQLHPSQDYCT. 49 disulfide bridges follow: Cys-839-Cys-852, Cys-847-Cys-861, Cys-863-Cys-876, Cys-882-Cys-893, Cys-887-Cys-902, Cys-904-Cys-919, Cys-925-Cys-936, Cys-931-Cys-945, Cys-947-Cys-959, Cys-965-Cys-976, Cys-971-Cys-985, Cys-988-Cys-999, Cys-1005-Cys-1016, Cys-1011-Cys-1025, Cys-1027-Cys-1040, Cys-1046-Cys-1057, Cys-1052-Cys-1066, Cys-1069-Cys-1082, Cys-1088-Cys-1099, Cys-1094-Cys-1108, Cys-1111-Cys-1124, Cys-1130-Cys-1142, Cys-1137-Cys-1151, Cys-1153-Cys-1165, Cys-1171-Cys-1183, Cys-1177-Cys-1192, Cys-1194-Cys-1207, Cys-1213-Cys-1224, Cys-1219-Cys-1233, Cys-1235-Cys-1249, Cys-1255-Cys-1268, Cys-1263-Cys-1277, Cys-1281-Cys-1293, Cys-1299-Cys-1311, Cys-1305-Cys-1320, Cys-1322-Cys-1335, Cys-1341-Cys-1353, Cys-1348-Cys-1362, Cys-1364-Cys-1378, Cys-1405-Cys-1428, Cys-1415-Cys-1440, Cys-1429-Cys-1443, Cys-1430-Cys-1455, Cys-1481-Cys-1494, Cys-1489-Cys-1503, Cys-1505-Cys-1518, Cys-1524-Cys-1534, Cys-1529-Cys-1543, and Cys-1545-Cys-1558. Residues 878-920 form the EGF-like 5; calcium-binding domain; it reads DDNECMRNPCEGRGRCVNSVGSYSCLCYPGYTLVTLGDTQECQ. One can recognise an EGF-like 6; calcium-binding domain in the interval 921–960; sequence DIDECEQPGVCSGGRCSNTEGSYHCECDRGYIMVRKGHCQ. The region spanning 961–1000 is the EGF-like 7; calcium-binding domain; the sequence is DINECRHPGTCPDGRCVNSPGSYTCLACEEGYVGQSGSCV. The EGF-like 8; calcium-binding domain maps to 1001-1041; the sequence is DVNECLTPGICTHGRCINMEGSFRCSCEPGYEVTPDKKGCR. Residues 1042–1083 enclose the EGF-like 9; calcium-binding domain; the sequence is DVDECASRASCPTGLCLNTEGSFTCSACQSGYWVNEDGTACE. Residues 1084 to 1125 form the EGF-like 10; calcium-binding domain; sequence DLDECAFPGVCPTGVCTNTVGSFSCKDCDQGYRPNPLGNRCE. In terms of domain architecture, EGF-like 11; calcium-binding spans 1126-1166; the sequence is DVDECEGPQSSCRGGECKNTEGSYQCLCHQGFQLVNGTMCE. An N-linked (GlcNAc...) asparagine glycan is attached at Asn-1161. Residues 1167–1208 enclose the EGF-like 12; calcium-binding domain; the sequence is DVNECVGEEHCAPHGECLNSLGSFFCLCAPGFASAEGGTRCQ. Positions 1209–1250 constitute an EGF-like 13; calcium-binding domain; that stretch reads DVDECAATDPCPGGHCVNTEGSFSCLCETASFQPSPDSGECL. In terms of domain architecture, EGF-like 14; calcium-binding spans 1251 to 1294; the sequence is DIDECEDREDPVCGAWRCENSPGSYRCILDCQPGFYVAPNGDCI. The region spanning 1295 to 1336 is the EGF-like 15; calcium-binding domain; it reads DIDECANDTVCGNHGFCDNTDGSFRCLCDQGFETSPSGWECV. An N-linked (GlcNAc...) asparagine glycan is attached at Asn-1301. One can recognise an EGF-like 16; calcium-binding domain in the interval 1337–1379; sequence DVNECELMMAVCGDALCENVEGSFLCLCASDLEEYDAEEGHCR. Residues 1403-1455 form the TB 3 domain; that stretch reads MECYSEHNGGPPCSQILGQNSTQAECCCTQGARWGKACAPCPSEDSVEFSQLC. Residue Asn-1422 is glycosylated (N-linked (GlcNAc...) asparagine). Residues 1477 to 1519 form the EGF-like 17; calcium-binding domain; the sequence is DADECVLFGPALCQNGRCSNIVPGYICLCNPGYHYDASSRKCQ. Residues 1520-1559 enclose the EGF-like 18; calcium-binding domain; it reads DHNECQDLACENGECVNQEGSFHCLCNPPLTLDLSGQRCV. N-linked (GlcNAc...) asparagine glycosylation is present at Asn-1560. Residues 1576–1628 form the TB 4 domain; it reads DICWKKVTNDVCSQPLRGHHTTYTECCCQDGEAWSQQCALCPPRSSEVYAQLC. 4 disulfides stabilise this stretch: Cys-1578–Cys-1601, Cys-1587–Cys-1613, Cys-1602–Cys-1616, and Cys-1603–Cys-1628. Residues 1631-1813 are C-terminal domain; the sequence is ARIEAERGAG…PGPPHCAAKE (183 aa). Positions 1671 to 1717 are disordered; that stretch reads YLGPEDTAPEPPFSNPASQPGDNTPVLEPPLQPSELQPHYLASHSEP. The EGF-like 19; calcium-binding domain maps to 1725-1765; that stretch reads QAEECGILNGCENGRCVRVREGYTCDCFEGFQLDAPTLACV. 6 cysteine pairs are disulfide-bonded: Cys-1729–Cys-1740, Cys-1735–Cys-1749, Cys-1751–Cys-1764, Cys-1770–Cys-1785, Cys-1780–Cys-1794, and Cys-1796–Cys-1809. In terms of domain architecture, EGF-like 20; calcium-binding spans 1766–1810; it reads DVNECEDLNGPARLCAHGHCENTEGSYRCHCSPGYVAEPGPPHCA.

This sequence belongs to the LTBP family. As to quaternary structure, forms part of the large latent transforming growth factor beta precursor complex; removal is essential for activation of complex. Interacts with SDC4. Interacts (via C-terminal domain) with FBN1 (via N-terminal domain) in a Ca(+2)-dependent manner. N-Glycosylated. Post-translationally, contains hydroxylated asparagine residues. In terms of tissue distribution, expressed in the anterior chamber of the eye.

The protein localises to the secreted. Its subcellular location is the extracellular space. The protein resides in the extracellular matrix. May play an integral structural role in elastic-fiber architectural organization and/or assembly. In Mus musculus (Mouse), this protein is Latent-transforming growth factor beta-binding protein 2 (Ltbp2).